Reading from the N-terminus, the 451-residue chain is Protein naked cuticle homolog 2 (451 aa).

A disordered region spans residues 1 to 108 (MGKLQSKHAA…PRGPGGQRLN (108 aa)). Glycine 2 carries the N-myristoyl glycine lipid modification. The tract at residues 2 to 173 (GKLQSKHAAA…GSSKTLRVKL (172 aa)) is targeting to the basolateral cell membrane. Basic and acidic residues-rich tracts occupy residues 34–63 (KGAE…REDQ) and 89–99 (DGERAANREGP). The segment at 113–178 (QCDVSVEEDD…LRVKLTVSPE (66 aa)) is interaction with DVL1, DVL2 and DVL3. An EF-hand domain is found at 119–154 (EEDDRQEWTFTLYDFDNCGKVTREDMSSLMHTIYEV). The Ca(2+) site is built by aspartate 132, aspartate 134, lysine 138, and aspartate 143. Disordered regions lie at residues 162 to 237 (SSGS…PYCV) and 256 to 408 (YTSR…TVEH). The span at 180-215 (SSKRKEGPPAGQDREPTRCRMEGELAEEPRVADRRL) shows a compositional bias: basic and acidic residues. The tract at residues 300–385 (QVLVEHVVPA…PPPPYGHKRY (86 aa)) is interaction with TGFA. Positions 332–351 (KSPKGSGKPPGVPASSKSGK) are enriched in low complexity.

It belongs to the NKD family. In terms of assembly, interacts with DVL1, DVL2, DVL3 and PPP2R3A. Interacts with RNF25 and TGFA (via cytoplasmic domain). In terms of processing, ubiquitinated, leading to rapid proteasomal degradation. Interaction with TGFA interferes with RNF25 binding and protects against ubiquitination mediated by RNF25. In terms of tissue distribution, expressed in kidney, lung, pancreas and spleen.

It localises to the cell membrane. The protein localises to the cytoplasm. The protein resides in the cytoplasmic vesicle. In terms of biological role, cell autonomous antagonist of the canonical Wnt signaling pathway. May activate a second Wnt signaling pathway that controls planar cell polarity. Required for processing of TGFA and for targeting of TGFA to the basolateral membrane of polarized epithelial cells. The sequence is that of Protein naked cuticle homolog 2 (NKD2) from Homo sapiens (Human).